A 279-amino-acid polypeptide reads, in one-letter code: Putative short-chain type dehydrogenase/reductase MSMEG_6031/MSMEI_5872 (279 aa).

11–33 (FITGAARGQGRSHAVRLAEEGAD) provides a ligand contact to NAD(+). Lys-65 participates in a covalent cross-link: Isoglutamyl lysine isopeptide (Lys-Gln) (interchain with Q-Cter in protein Pup). Residue Ser-158 participates in substrate binding. Catalysis depends on Tyr-171, which acts as the Proton acceptor.

The protein belongs to the short-chain dehydrogenases/reductases (SDR) family.

This is Putative short-chain type dehydrogenase/reductase MSMEG_6031/MSMEI_5872 from Mycolicibacterium smegmatis (strain ATCC 700084 / mc(2)155) (Mycobacterium smegmatis).